The following is a 90-amino-acid chain: DNA-directed RNA polymerase subunit omega (90 aa).

Belongs to the RNA polymerase subunit omega family. The RNAP catalytic core consists of 2 alpha, 1 beta, 1 beta' and 1 omega subunit. When a sigma factor is associated with the core the holoenzyme is formed, which can initiate transcription.

It carries out the reaction RNA(n) + a ribonucleoside 5'-triphosphate = RNA(n+1) + diphosphate. Promotes RNA polymerase assembly. Latches the N- and C-terminal regions of the beta' subunit thereby facilitating its interaction with the beta and alpha subunits. This chain is DNA-directed RNA polymerase subunit omega, found in Streptomyces griseus subsp. griseus (strain JCM 4626 / CBS 651.72 / NBRC 13350 / KCC S-0626 / ISP 5235).